A 561-amino-acid polypeptide reads, in one-letter code: DNA ligase B (561 aa).

Lys-125 (N6-AMP-lysine intermediate) is an active-site residue.

The protein belongs to the NAD-dependent DNA ligase family. LigB subfamily.

The enzyme catalyses NAD(+) + (deoxyribonucleotide)n-3'-hydroxyl + 5'-phospho-(deoxyribonucleotide)m = (deoxyribonucleotide)n+m + AMP + beta-nicotinamide D-nucleotide.. Catalyzes the formation of phosphodiester linkages between 5'-phosphoryl and 3'-hydroxyl groups in double-stranded DNA using NAD as a coenzyme and as the energy source for the reaction. This Salmonella dublin (strain CT_02021853) protein is DNA ligase B.